The sequence spans 347 residues: Anthranilate phosphoribosyltransferase (347 aa).

5-phospho-alpha-D-ribose 1-diphosphate contacts are provided by residues Gly88, 91-92 (GD), Thr96, 98-101 (NIST), 116-124 (KHGNRSVSS), and Ser128. Gly88 contributes to the anthranilate binding site. Position 100 (Ser100) interacts with Mg(2+). Residue Asn119 participates in anthranilate binding. Position 174 (Arg174) interacts with anthranilate. Residues Asp232 and Glu233 each contribute to the Mg(2+) site.

This sequence belongs to the anthranilate phosphoribosyltransferase family. In terms of assembly, homodimer. Mg(2+) is required as a cofactor.

It catalyses the reaction N-(5-phospho-beta-D-ribosyl)anthranilate + diphosphate = 5-phospho-alpha-D-ribose 1-diphosphate + anthranilate. Its pathway is amino-acid biosynthesis; L-tryptophan biosynthesis; L-tryptophan from chorismate: step 2/5. Its function is as follows. Catalyzes the transfer of the phosphoribosyl group of 5-phosphorylribose-1-pyrophosphate (PRPP) to anthranilate to yield N-(5'-phosphoribosyl)-anthranilate (PRA). This chain is Anthranilate phosphoribosyltransferase, found in Shewanella sp. (strain MR-7).